Here is a 66-residue protein sequence, read N- to C-terminus: Large ribosomal subunit protein bL31 (66 aa).

Cys16, Cys18, Cys36, and Cys39 together coordinate Zn(2+).

Belongs to the bacterial ribosomal protein bL31 family. Type A subfamily. As to quaternary structure, part of the 50S ribosomal subunit. Zn(2+) serves as cofactor.

In terms of biological role, binds the 23S rRNA. The polypeptide is Large ribosomal subunit protein bL31 (Campylobacter lari (strain RM2100 / D67 / ATCC BAA-1060)).